Consider the following 343-residue polypeptide: Small ribosomal subunit biogenesis GTPase RsgA (343 aa).

Residues 116–275 enclose the CP-type G domain; it reads RGQLKPVAAN…LIDSPGIREF (160 aa). Residues 163–166 and 217–225 each bind GTP; these read NKAD and GQSGVGKSS. Zn(2+)-binding residues include cysteine 299, cysteine 304, histidine 306, and cysteine 312.

Belongs to the TRAFAC class YlqF/YawG GTPase family. RsgA subfamily. In terms of assembly, monomer. Associates with 30S ribosomal subunit, binds 16S rRNA. Zn(2+) is required as a cofactor.

The protein resides in the cytoplasm. One of several proteins that assist in the late maturation steps of the functional core of the 30S ribosomal subunit. Helps release RbfA from mature subunits. May play a role in the assembly of ribosomal proteins into the subunit. Circularly permuted GTPase that catalyzes slow GTP hydrolysis, GTPase activity is stimulated by the 30S ribosomal subunit. The sequence is that of Small ribosomal subunit biogenesis GTPase RsgA from Pseudomonas syringae pv. syringae (strain B728a).